The sequence spans 473 residues: MGYLIAFIILLILFVLLITIVPVVMVVYLKKKQLKLTFVPKSQTSFKKIVQKTKDLEEECEDLNNKNNELKKAISDQNLQIDLLKKNNENFLLNATSLTAEQAKKELFNLLKIKFKKELAQEYAKIKHEFNEAQEIYAQNILVETMEQIAEPLIVERSLFNIDIIDENLKGKIIGRDGRNKAVFENEGGVDLIVDRQQPIVGISTPNPIRREIARIVMQKLIDSKNIDINRIELLFKEEREKFEKKVFEIGKNVVEQTLGFFDLPEGIYSYIGRMKFRNSYGQNILSHSLEVAEYAERIAKLINIDPIKAKKAAFFHDIGKTIDFESDLDHVEAGLLIAKKFNLDDYIYNAIESHHNKVIPTTIYGALVKIVDTLSAARPGARVNSYDEYYSRVKELETICMRFEGVKSAYVIKSGRQLRVIVDSNLVSDEQLELLGHEIKVAIEENDLLTNYKIKIVLIKEKRISIDTNIIG.

A helical transmembrane segment spans residues L4–V24. The KH domain occupies S158–M218. One can recognise an HD domain in the interval I285–A378.

Belongs to the RNase Y family.

The protein resides in the cell membrane. Endoribonuclease that initiates mRNA decay. The sequence is that of Ribonuclease Y from Ureaplasma parvum serovar 3 (strain ATCC 27815 / 27 / NCTC 11736).